We begin with the raw amino-acid sequence, 314 residues long: 3'-5' exoribonuclease YhaM (314 aa).

Residues 14-90 (VDLYLLIKSS…QLKLRNIRPA (77 aa)) constitute a DNA-binding region (OB). An HD domain is found at 163–279 (HVVSMLNLAK…LHYIDNLDAK (117 aa)).

It belongs to the YhaM family.

In terms of biological role, shows a 3'-5' exoribonuclease activity. This is 3'-5' exoribonuclease YhaM from Bacillus licheniformis (strain ATCC 14580 / DSM 13 / JCM 2505 / CCUG 7422 / NBRC 12200 / NCIMB 9375 / NCTC 10341 / NRRL NRS-1264 / Gibson 46).